Reading from the N-terminus, the 393-residue chain is Homogentisate phytyltransferase 1, chloroplastic (393 aa).

A chloroplast-targeting transit peptide spans 1–36; sequence MESLLSSSSLVSAAGGFCWKKQNLKLHSLSEIRVLR. Transmembrane regions (helical) follow at residues 108–128, 133–153, 170–190, 205–227, 232–252, 271–291, 314–334, 338–358, and 371–391; these read TVIG…EKVS, LLFT…IYIV, YLPL…VASF, PLFW…LPLL, FALV…QIAF, LIFA…FKDI, VFWT…LVGA, FIWS…TLWA, and ITSC…LLPF.

The protein belongs to the UbiA prenyltransferase family.

It is found in the plastid. Its subcellular location is the chloroplast membrane. The enzyme catalyses phytyl diphosphate + homogentisate + H(+) = 2-methyl-6-phytyl-1,4-benzene-1,4-diol + CO2 + diphosphate. It functions in the pathway cofactor biosynthesis; tocopherol biosynthesis. Involved in the synthesis of tocopherol (vitamin E). Catalyzes the condensation of homogentisate and phytyl diphosphate to form dimethylphytylhydrquinone. Low activity with geranylgeranyl diphosphate as substrate, but no activity with farnesyl diphosphate or solanesyl diphosphate. Tocopherol functions to limit lipid oxidation during seed desiccation, quiescence and germination and early seedling development. Protects thylakoid membrane lipids from photooxidation and is required for low-temperature adaptation. The sequence is that of Homogentisate phytyltransferase 1, chloroplastic (HPT1) from Arabidopsis thaliana (Mouse-ear cress).